The following is a 111-amino-acid chain: 2Fe-2S ferredoxin (111 aa).

The 2Fe-2S ferredoxin-type domain maps to 1–104; it reads MPKVLFLPHK…DIEVEIPLYN (104 aa). Residues Cys-42, Cys-48, Cys-51, and Cys-87 each coordinate [2Fe-2S] cluster.

It belongs to the adrenodoxin/putidaredoxin family. [2Fe-2S] cluster is required as a cofactor.

Functionally, ferredoxin are iron-sulfur proteins that transfer electrons in a wide variety of metabolic reactions. In Buchnera aphidicola subsp. Acyrthosiphon pisum (strain APS) (Acyrthosiphon pisum symbiotic bacterium), this protein is 2Fe-2S ferredoxin (fdx).